Consider the following 254-residue polypeptide: UPF0246 protein FTF1693c (254 aa).

It belongs to the UPF0246 family.

In Francisella tularensis subsp. tularensis (strain FSC 198), this protein is UPF0246 protein FTF1693c.